A 530-amino-acid chain; its full sequence is MTAKTAPKVTLWEFFQQLGKTFMLPVALLSFCGIMLGIGSSLSSHDVITLIPVLGNPVLQAIFTWMSKIGSFAFSFLPVMFCIAIPLGLARENKGVAAFAGFIGYAVMNLAVNFWLTNKGILPTTDAAVLKANNIQSILGIQSIDTGILGAVIAGIIVWMLHERFHNIRLPDALAFFGGTRFVPIISSLVMGLVGLVIPLVWPIFAMGISGLGHMINSAGDFGPMLFGTGERLLLPFGLHHILVALIRFTDAGGTQEVCGQTVSGALTIFQAQLSCPTTHGFSESATRFLSQGKMPAFLGGLPGAALAMYHCARPENRHKIKGLLISGLIACVVGGTTEPLEFLFLFVAPVLYVIHALLTGLGFTVMSVLGVTIGNTDGNIIDFVVFGILHGLSTKWYMVPVVAAIWFVVYYVIFRFAITRFNLKTPGRDSEVASSIEKAVAGAPGKSGYNVPAILEALGGADNIVSLDNCITRLRLSVKDMSLVNVQALKDNRAIGVVQLNQHNLQVVIGPQVQSVKDEMAGLMHTVQA.

A PTS EIIC type-1 domain is found at 1–431 (MTAKTAPKVT…FNLKTPGRDS (431 aa)). The next 10 helical transmembrane spans lie at 22–42 (FMLP…GSSL), 69–89 (IGSF…PLGL), 96–116 (VAAF…NFWL), 138–158 (ILGI…GIIV), 189–209 (LVMG…AMGI), 289–309 (FLSQ…ALAM), 321–341 (IKGL…TEPL), 343–363 (FLFL…TGLG), 369–389 (VLGV…VFGI), and 399–419 (MVPV…RFAI). Residues 449–530 (GYNVPAILEA…MAGLMHTVQA (82 aa)) enclose the PTS EIIB type-1 domain. C471 acts as the Phosphocysteine intermediate; for EIIB activity in catalysis.

Its subcellular location is the cell inner membrane. The catalysed reaction is D-maltose(out) + N(pros)-phospho-L-histidyl-[protein] = alpha-maltose 6'-phosphate(in) + L-histidyl-[protein]. In terms of biological role, the phosphoenolpyruvate-dependent sugar phosphotransferase system (sugar PTS), a major carbohydrate active transport system, catalyzes the phosphorylation of incoming sugar substrates concomitantly with their translocation across the cell membrane. This system is involved in maltose transport. MalX can also recognize and transport glucose even though this sugar may not represent the natural substrate of the system. In Escherichia coli (strain K12), this protein is PTS system maltose-specific EIICB component.